The following is a 330-amino-acid chain: Ribosomal RNA small subunit methyltransferase A (330 aa).

Positions 29, 31, 56, 77, and 98 each coordinate S-adenosyl-L-methionine. The disordered stretch occupies residues P115–G158. N177 provides a ligand contact to S-adenosyl-L-methionine.

Belongs to the class I-like SAM-binding methyltransferase superfamily. rRNA adenine N(6)-methyltransferase family. RsmA subfamily.

It is found in the cytoplasm. The catalysed reaction is adenosine(1518)/adenosine(1519) in 16S rRNA + 4 S-adenosyl-L-methionine = N(6)-dimethyladenosine(1518)/N(6)-dimethyladenosine(1519) in 16S rRNA + 4 S-adenosyl-L-homocysteine + 4 H(+). Its function is as follows. Specifically dimethylates two adjacent adenosines (A1518 and A1519) in the loop of a conserved hairpin near the 3'-end of 16S rRNA in the 30S particle. May play a critical role in biogenesis of 30S subunits. The polypeptide is Ribosomal RNA small subunit methyltransferase A (Polaromonas sp. (strain JS666 / ATCC BAA-500)).